We begin with the raw amino-acid sequence, 151 residues long: Macrodomain Ter protein (151 aa).

This sequence belongs to the MatP family. Homodimer.

Its subcellular location is the cytoplasm. Required for spatial organization of the terminus region of the chromosome (Ter macrodomain) during the cell cycle. Prevents early segregation of duplicated Ter macrodomains during cell division. Binds specifically to matS, which is a 13 bp signature motif repeated within the Ter macrodomain. In Vibrio atlanticus (strain LGP32) (Vibrio splendidus (strain Mel32)), this protein is Macrodomain Ter protein.